The following is a 180-amino-acid chain: UPF0340 protein BLi03936/BL03990 (180 aa).

This sequence belongs to the UPF0340 family.

This chain is UPF0340 protein BLi03936/BL03990, found in Bacillus licheniformis (strain ATCC 14580 / DSM 13 / JCM 2505 / CCUG 7422 / NBRC 12200 / NCIMB 9375 / NCTC 10341 / NRRL NRS-1264 / Gibson 46).